The following is a 183-amino-acid chain: MDFSDDNLIWLDLEMTGLDPERDRIIEIATIVTNSHLDILAEGPAFAIHQPDKLLTAMDNWNTSHHTASGLLERVKNSSVDEVEAETLTLAFLEKYVSAGKSPLCGNSVCQDRRFLSRYMPRLNQFFHYRHLDVTTLKILAQRWAPQIAAAHIKESQHLALQDIRDSIEELRYYRAHLLNLSK.

The Exonuclease domain maps to 8-171 (LIWLDLEMTG…QDIRDSIEEL (164 aa)). Tyr129 is a catalytic residue.

It belongs to the oligoribonuclease family.

The protein resides in the cytoplasm. 3'-to-5' exoribonuclease specific for small oligoribonucleotides. In Coxiella burnetii (strain RSA 493 / Nine Mile phase I), this protein is Oligoribonuclease.